We begin with the raw amino-acid sequence, 174 residues long: Transcription factor bHLH36 (174 aa).

The bHLH domain maps to 1–53; that stretch reads MEKMMHRETERQRRQEMASLYASLRSLLPLHFIKGKRSTSDQVNEAVNYIKYL.

Homodimer. Expressed constitutively in roots, leaves, stems, and flowers.

Its subcellular location is the nucleus. This is Transcription factor bHLH36 (BHLH36) from Arabidopsis thaliana (Mouse-ear cress).